Here is a 1491-residue protein sequence, read N- to C-terminus: CLIP-associating protein (1491 aa).

HEAT repeat units follow at residues 44–82, 85–123, 163–201, and 402–440; these read CTDM…RLGS, NAYT…HRVL, QLSV…HVGD, and DAFC…YTHA. Disordered stretches follow at residues 537-586 and 600-739; these read RERE…AVDT and LYSR…NNPV. Residues 542 to 551 show a composition bias toward gly residues; that stretch reads GGGGGTGTGT. Over residues 569 to 580 the composition is skewed to polar residues; it reads GTLQKPTPSMRS. 3 positions are modified to phosphoserine: Ser-582, Ser-626, and Ser-634. Residues 632-646 show a composition bias toward polar residues; it reads LNSNSGGTPATTPGS. Thr-648 carries the post-translational modification Phosphothreonine. 2 stretches are compositionally biased toward polar residues: residues 657 to 671 and 699 to 712; these read VSQS…SPST and PRST…SPTR. Phosphoserine is present on residues Ser-806, Ser-817, Ser-820, Ser-822, and Ser-824. 2 HEAT repeats span residues 874–912 and 955–993; these read QQQL…VHAN and QLQL…TYCK. Disordered regions lie at residues 1065–1127 and 1167–1205; these read HMRR…SVEQ and GHLQ…ESAT. 3 stretches are compositionally biased toward low complexity: residues 1070–1097, 1111–1124, and 1181–1200; these read SQSC…QSPS, LSIS…RQSS, and ASLS…QSNT. Ser-1120, Ser-1123, and Ser-1124 each carry phosphoserine. 2 HEAT repeats span residues 1289-1327 and 1408-1446; these read NKHF…SNKM and DAHL…VLGE.

Belongs to the CLASP family. In terms of assembly, interacts with CLIP-190 and microtubules. As to expression, expressed in testis and ovary.

It localises to the cytoplasm. The protein localises to the cytoskeleton. Its subcellular location is the nucleus. It is found in the microtubule organizing center. The protein resides in the centrosome. It localises to the spindle. The protein localises to the cell projection. Its subcellular location is the growth cone. It is found in the cleavage furrow. Microtubule plus-end tracking protein that promotes the stabilization of dynamic microtubules. Required for several aspects of mitotic spindle formation including the formation of the overlapping central spindle microtubules and kinetochore attachment. Required for the incorporation of tubulin subunits at the plus ends of kinetochore microtubules during poleward microtubule flux. Acts antagonistically to Klp10A and Klp67A to maintain metaphase spindle length. Also required for guidance of CNS axons downstream of Abl. May function to identify a subset of microtubules that probe the peripheral growth cone domain, where guidance signals exert their influence on cytoskeletal organization. Also required during oogenesis for the organization of the polarized microtubule network inside the 16-cell cyst that ensures oocyte differentiation. The protein is CLIP-associating protein (chb) of Drosophila melanogaster (Fruit fly).